A 901-amino-acid chain; its full sequence is Cyanophycin synthetase (901 aa).

One can recognise an ATP-grasp domain in the interval 224-478; the sequence is KRILAASGVP…VAGAVMDMLF (255 aa). 493-499 is a binding site for ATP; the sequence is GTNGKTT.

This sequence in the C-terminal section; belongs to the MurCDEF family. Homodimer.

The enzyme catalyses [L-4-(L-arginin-2-N-yl)aspartate](n) + L-aspartate + ATP = [L-4-(L-arginin-2-N-yl)aspartate](n)-L-aspartate + ADP + phosphate + H(+). It catalyses the reaction [L-4-(L-arginin-2-N-yl)aspartate](n)-L-aspartate + L-arginine + ATP = [L-4-(L-arginin-2-N-yl)aspartate](n+1) + ADP + phosphate + H(+). Catalyzes the ATP-dependent polymerization of arginine and aspartate to multi-L-arginyl-poly-L-aspartic acid (cyanophycin; a water-insoluble reserve polymer). In Nostoc sp. (strain PCC 7120 / SAG 25.82 / UTEX 2576), this protein is Cyanophycin synthetase (cphA).